The following is a 1367-amino-acid chain: Dynactin, 150 kDa isoform (1367 aa).

Residues 28 to 70 (GETAFAPGTWVGIELDEPSGKNDGSVQGERYFNCEMGYGMFVR) enclose the CAP-Gly domain. The interval 76–318 (VIAQPPPPPP…NLKATTITPR (243 aa)) is disordered. Composition is skewed to low complexity over residues 88–99 (TFRRSVTTRPTS) and 132–149 (PSRTSSTSITRSPTRSPT). Residues 150–163 (KQLATASSSGNPSR) show a composition bias toward polar residues. 2 stretches are compositionally biased toward low complexity: residues 164–190 (SGTPSTTTKPAGPTTRTRPSLSTSRHS) and 243–259 (STGSVSSVGKSGFKRGS). Coiled coils occupy residues 321–598 (ITNT…MQEE), 637–698 (LQSD…EAEQ), and 1039–1199 (AELK…RARL).

Belongs to the dynactin 150 kDa subunit family. As to quaternary structure, large macromolecular complex of at least 10 components; p150(glued) binds directly to microtubules and to cytoplasmic dynein.

Its subcellular location is the cytoplasm. The protein resides in the cytoskeleton. Its function is as follows. Required for the cytoplasmic dynein-driven retrograde movement of vesicles and organelles along microtubules. Dynein-dynactin interaction is a key component of the mechanism of axonal transport of vesicles and organelles. This Neurospora crassa (strain ATCC 24698 / 74-OR23-1A / CBS 708.71 / DSM 1257 / FGSC 987) protein is Dynactin, 150 kDa isoform (ro-3).